Consider the following 897-residue polypeptide: Isoleucine--tRNA ligase (897 aa).

A 'HIGH' region motif is present at residues 59–69; sequence PYANGDIHVGH. Residue Glu-553 participates in L-isoleucyl-5'-AMP binding. A 'KMSKS' region motif is present at residues 594–598; it reads KMSKS. Residue Lys-597 coordinates ATP. The Zn(2+) site is built by Cys-866, Cys-869, Cys-883, and Cys-886.

Belongs to the class-I aminoacyl-tRNA synthetase family. IleS type 1 subfamily. As to quaternary structure, monomer. Zn(2+) is required as a cofactor.

Its subcellular location is the cytoplasm. The enzyme catalyses tRNA(Ile) + L-isoleucine + ATP = L-isoleucyl-tRNA(Ile) + AMP + diphosphate. Its function is as follows. Catalyzes the attachment of isoleucine to tRNA(Ile). As IleRS can inadvertently accommodate and process structurally similar amino acids such as valine, to avoid such errors it has two additional distinct tRNA(Ile)-dependent editing activities. One activity is designated as 'pretransfer' editing and involves the hydrolysis of activated Val-AMP. The other activity is designated 'posttransfer' editing and involves deacylation of mischarged Val-tRNA(Ile). The chain is Isoleucine--tRNA ligase from Mycoplasmopsis synoviae (strain 53) (Mycoplasma synoviae).